A 334-amino-acid chain; its full sequence is Putative carboxypeptidase VC_A0337 (334 aa).

Serine 112 acts as the Nucleophile in catalysis. Active-site charge relay system residues include glutamate 234 and histidine 302.

It belongs to the peptidase S66 family.

In Vibrio cholerae serotype O1 (strain ATCC 39315 / El Tor Inaba N16961), this protein is Putative carboxypeptidase VC_A0337.